A 156-amino-acid polypeptide reads, in one-letter code: Ribonuclease pancreatic (156 aa).

An N-terminal signal peptide occupies residues 1–26 (MGLEKSLVFFPLLVLLALGWVQPCLG). Residues Lys33 and Arg36 each coordinate substrate. His38 serves as the catalytic Proton acceptor. Disulfide bonds link Cys54–Cys112, Cys68–Cys123, Cys86–Cys138, and Cys93–Cys100. Residue 69–73 (KPVNT) coordinates substrate. Asn90 is a glycosylation site (N-linked (GlcNAc...) asparagine). Residues Lys94 and Arg113 each contribute to the substrate site. His147 acts as the Proton donor in catalysis.

Belongs to the pancreatic ribonuclease family. As to quaternary structure, monomer. Interacts with and forms tight 1:1 complexes with RNH1. Dimerization of two such complexes may occur. Interaction with RNH1 inhibits this protein. Pancreas.

It localises to the secreted. It catalyses the reaction an [RNA] containing cytidine + H2O = an [RNA]-3'-cytidine-3'-phosphate + a 5'-hydroxy-ribonucleotide-3'-[RNA].. The catalysed reaction is an [RNA] containing uridine + H2O = an [RNA]-3'-uridine-3'-phosphate + a 5'-hydroxy-ribonucleotide-3'-[RNA].. Functionally, endonuclease that catalyzes the cleavage of RNA on the 3' side of pyrimidine nucleotides. Acts on single-stranded and double-stranded RNA. The protein is Ribonuclease pancreatic (RNASE1) of Glis glis (Fat dormouse).